The primary structure comprises 156 residues: Small ribosomal subunit protein uS7 (156 aa).

It belongs to the universal ribosomal protein uS7 family. In terms of assembly, part of the 30S ribosomal subunit. Contacts proteins S9 and S11.

One of the primary rRNA binding proteins, it binds directly to 16S rRNA where it nucleates assembly of the head domain of the 30S subunit. Is located at the subunit interface close to the decoding center, probably blocks exit of the E-site tRNA. In Streptococcus pneumoniae serotype 4 (strain ATCC BAA-334 / TIGR4), this protein is Small ribosomal subunit protein uS7.